Here is a 469-residue protein sequence, read N- to C-terminus: MNPNQKIITIGSVSLTIATICFLMQIAIQVTTVTLHFKQYECDSPANNQVMPCEPIIIERNITEIVYLTNTTIEKEICPKLVEYRNWSKPQCKITGFAPFSKDNSIRLSAGGDIWVTREPYVSCDPGKCYQFALGQGTTLDNKHSNDTIHDRTPHRTLLMNELGVPFHLGTRQVCIGWSSSSCHDGKAWLHVCVTGYDKNATASFIYDGRLVDSIGSWSQNILRTQESECVCINGTCTVVMTDGSASGRADTKILFIEEGKIVHISPLSGSAQHVEECSCYPRYPGVRCICRDNWKGSNRPVVDINVKDYSIDSSYVCSGLVGDTPRNNDRSSNSYCRNPNNEKGNHGVKGWAFDDGNDVWMGRTISEDSRSGYETFKVIGGWSTPNSKLQINRQVIVDSDNRSGYSGIFSVEGKSCINRCFYVELIRGREQETRVWWTSNSIVVFCGTSGTYGTGSWPDGADINLMPI.

Residues 1-6 lie on the Intravirion side of the membrane; the sequence is MNPNQK. A helical transmembrane segment spans residues 7 to 29; the sequence is IITIGSVSLTIATICFLMQIAIQ. Residues 11–33 form an involved in apical transport and lipid raft association region; that stretch reads GSVSLTIATICFLMQIAIQVTTV. The Virion surface portion of the chain corresponds to 30–469; it reads VTTVTLHFKQ…DGADINLMPI (440 aa). Residues 36–88 are hypervariable stalk region; that stretch reads HFKQYECDSPANNQVMPCEPIIIERNITEIVYLTNTTIEKEICPKLVEYRNWS. Residues Asn61, Asn70, and Asn86 are each glycosylated (N-linked (GlcNAc...) asparagine; by host). Positions 91–469 are head of neuraminidase; that stretch reads QCKITGFAPF…DGADINLMPI (379 aa). 8 cysteine pairs are disulfide-bonded: Cys92-Cys417, Cys124-Cys129, Cys183-Cys230, Cys232-Cys237, Cys278-Cys291, Cys280-Cys289, Cys318-Cys337, and Cys421-Cys447. Arg118 serves as a coordination point for substrate. N-linked (GlcNAc...) asparagine; by host glycosylation occurs at Asn146. The active-site Proton donor/acceptor is Asp151. Arg152 contributes to the substrate binding site. Residues Asn200 and Asn234 are each glycosylated (N-linked (GlcNAc...) asparagine; by host). Position 276 to 277 (276 to 277) interacts with substrate; the sequence is EE. Arg292 lines the substrate pocket. Residues Asp293, Gly297, and Asp324 each coordinate Ca(2+). Arg371 is a substrate binding site. The N-linked (GlcNAc...) asparagine; by host glycan is linked to Asn402. Tyr406 functions as the Nucleophile in the catalytic mechanism.

This sequence belongs to the glycosyl hydrolase 34 family. In terms of assembly, homotetramer. Ca(2+) serves as cofactor. N-glycosylated.

It localises to the virion membrane. Its subcellular location is the host apical cell membrane. It carries out the reaction Hydrolysis of alpha-(2-&gt;3)-, alpha-(2-&gt;6)-, alpha-(2-&gt;8)- glycosidic linkages of terminal sialic acid residues in oligosaccharides, glycoproteins, glycolipids, colominic acid and synthetic substrates.. Inhibited by the neuraminidase inhibitors zanamivir (Relenza) and oseltamivir (Tamiflu). These drugs interfere with the release of progeny virus from infected cells and are effective against all influenza strains. Resistance to neuraminidase inhibitors is quite rare. Its function is as follows. Catalyzes the removal of terminal sialic acid residues from viral and cellular glycoconjugates. Cleaves off the terminal sialic acids on the glycosylated HA during virus budding to facilitate virus release. Additionally helps virus spread through the circulation by further removing sialic acids from the cell surface. These cleavages prevent self-aggregation and ensure the efficient spread of the progeny virus from cell to cell. Otherwise, infection would be limited to one round of replication. Described as a receptor-destroying enzyme because it cleaves a terminal sialic acid from the cellular receptors. May facilitate viral invasion of the upper airways by cleaving the sialic acid moieties on the mucin of the airway epithelial cells. Likely to plays a role in the budding process through its association with lipid rafts during intracellular transport. May additionally display a raft-association independent effect on budding. Plays a role in the determination of host range restriction on replication and virulence. Sialidase activity in late endosome/lysosome traffic seems to enhance virus replication. This chain is Neuraminidase, found in Aves (whales).